A 275-amino-acid polypeptide reads, in one-letter code: Polyamine aminopropyltransferase (275 aa).

Residues 2–235 (ELWFTEKQTK…GLWTFTIGSK (234 aa)) form the PABS domain. Residue Gln31 coordinates S-methyl-5'-thioadenosine. Spermidine contacts are provided by His62 and Asp86. S-methyl-5'-thioadenosine contacts are provided by residues Glu106 and 137–138 (DG). Asp155 (proton acceptor) is an active-site residue. A spermidine-binding site is contributed by 155–158 (DSTE). Position 162 (Pro162) interacts with S-methyl-5'-thioadenosine.

This sequence belongs to the spermidine/spermine synthase family. Homodimer or homotetramer.

Its subcellular location is the cytoplasm. It carries out the reaction S-adenosyl 3-(methylsulfanyl)propylamine + putrescine = S-methyl-5'-thioadenosine + spermidine + H(+). It functions in the pathway amine and polyamine biosynthesis; spermidine biosynthesis; spermidine from putrescine: step 1/1. Catalyzes the irreversible transfer of a propylamine group from the amino donor S-adenosylmethioninamine (decarboxy-AdoMet) to putrescine (1,4-diaminobutane) to yield spermidine. The protein is Polyamine aminopropyltransferase of Bacillus cereus (strain ATCC 10987 / NRS 248).